Here is a 492-residue protein sequence, read N- to C-terminus: 3-octaprenyl-4-hydroxybenzoate carboxy-lyase (492 aa).

Asn177 serves as a coordination point for Mn(2+). Prenylated FMN contacts are provided by residues Ile180–Arg182, Arg194–Leu196, and Arg199–Gly200. Residue Glu243 coordinates Mn(2+). The active-site Proton donor is the Asp292.

It belongs to the UbiD family. In terms of assembly, homohexamer. The cofactor is prenylated FMN. Mn(2+) serves as cofactor.

Its subcellular location is the cell membrane. It catalyses the reaction a 4-hydroxy-3-(all-trans-polyprenyl)benzoate + H(+) = a 2-(all-trans-polyprenyl)phenol + CO2. Its pathway is cofactor biosynthesis; ubiquinone biosynthesis. Its function is as follows. Catalyzes the decarboxylation of 3-octaprenyl-4-hydroxy benzoate to 2-octaprenylphenol, an intermediate step in ubiquinone biosynthesis. The sequence is that of 3-octaprenyl-4-hydroxybenzoate carboxy-lyase from Neisseria gonorrhoeae (strain ATCC 700825 / FA 1090).